Reading from the N-terminus, the 452-residue chain is UDP-N-acetylmuramoylalanine--D-glutamate ligase (452 aa).

ATP is bound at residue 115-121; sequence GTNGKTT.

The protein belongs to the MurCDEF family.

It is found in the cytoplasm. The catalysed reaction is UDP-N-acetyl-alpha-D-muramoyl-L-alanine + D-glutamate + ATP = UDP-N-acetyl-alpha-D-muramoyl-L-alanyl-D-glutamate + ADP + phosphate + H(+). It functions in the pathway cell wall biogenesis; peptidoglycan biosynthesis. Its function is as follows. Cell wall formation. Catalyzes the addition of glutamate to the nucleotide precursor UDP-N-acetylmuramoyl-L-alanine (UMA). This is UDP-N-acetylmuramoylalanine--D-glutamate ligase from Citrifermentans bemidjiense (strain ATCC BAA-1014 / DSM 16622 / JCM 12645 / Bem) (Geobacter bemidjiensis).